Here is a 188-residue protein sequence, read N- to C-terminus: Threonylcarbamoyl-AMP synthase (188 aa).

The YrdC-like domain occupies 3-188 (QLHPSDIKDI…RSGKILRNGQ (186 aa)).

It belongs to the SUA5 family. TsaC subfamily.

The protein localises to the cytoplasm. It carries out the reaction L-threonine + hydrogencarbonate + ATP = L-threonylcarbamoyladenylate + diphosphate + H2O. In terms of biological role, required for the formation of a threonylcarbamoyl group on adenosine at position 37 (t(6)A37) in tRNAs that read codons beginning with adenine. Catalyzes the conversion of L-threonine, HCO(3)(-)/CO(2) and ATP to give threonylcarbamoyl-AMP (TC-AMP) as the acyladenylate intermediate, with the release of diphosphate. The sequence is that of Threonylcarbamoyl-AMP synthase from Shewanella baltica (strain OS195).